Consider the following 251-residue polypeptide: GTP cyclohydrolase 1 type 2 homolog (251 aa).

H63, H64, D101, H219, and E223 together coordinate a divalent metal cation.

This sequence belongs to the GTP cyclohydrolase I type 2/NIF3 family. In terms of assembly, toroid-shaped homohexamer. In the hexamer, 3 dimers assemble to form a ring-like structure surrounding a central hole.

This chain is GTP cyclohydrolase 1 type 2 homolog, found in Haemophilus influenzae (strain ATCC 51907 / DSM 11121 / KW20 / Rd).